Reading from the N-terminus, the 474-residue chain is Trehalose-6-phosphate synthase (474 aa).

Arg-10 is a binding site for D-glucose 6-phosphate. 22–23 (GG) is a UDP-alpha-D-glucose binding site. Residues Tyr-77 and Asp-131 each coordinate D-glucose 6-phosphate. Arg-263 and Lys-268 together coordinate UDP-alpha-D-glucose. D-glucose 6-phosphate is bound at residue Arg-301. UDP-alpha-D-glucose is bound by residues Phe-340 and 366-370 (LVAKE).

Belongs to the glycosyltransferase 20 family. As to quaternary structure, homotetramer.

The catalysed reaction is D-glucose 6-phosphate + UDP-alpha-D-glucose = alpha,alpha-trehalose 6-phosphate + UDP + H(+). It functions in the pathway glycan biosynthesis; trehalose biosynthesis. Its function is as follows. Probably involved in the osmoprotection via the biosynthesis of trehalose. Catalyzes the transfer of glucose from UDP-alpha-D-glucose (UDP-Glc) to D-glucose 6-phosphate (Glc-6-P) to form trehalose-6-phosphate. Acts with retention of the anomeric configuration of the UDP-sugar donor. The chain is Trehalose-6-phosphate synthase from Enterobacter sp. (strain 638).